A 248-amino-acid chain; its full sequence is uncharacterized protein (248 aa).

A signal peptide spans 1 to 26; sequence MVAPRISPKIVLVGFALFAIISASLA.

This is an uncharacterized protein from Acanthamoeba polyphaga mimivirus (APMV).